A 446-amino-acid polypeptide reads, in one-letter code: 5-methylthioadenosine/S-adenosylhomocysteine deaminase (446 aa).

Zn(2+)-binding residues include His-72 and His-74. 2 residues coordinate substrate: Glu-101 and His-194. His-221 is a Zn(2+) binding site. 2 residues coordinate substrate: Glu-224 and Asp-309. Position 309 (Asp-309) interacts with Zn(2+).

It belongs to the metallo-dependent hydrolases superfamily. MTA/SAH deaminase family. Requires Zn(2+) as cofactor.

The enzyme catalyses S-adenosyl-L-homocysteine + H2O + H(+) = S-inosyl-L-homocysteine + NH4(+). It carries out the reaction S-methyl-5'-thioadenosine + H2O + H(+) = S-methyl-5'-thioinosine + NH4(+). Catalyzes the deamination of 5-methylthioadenosine and S-adenosyl-L-homocysteine into 5-methylthioinosine and S-inosyl-L-homocysteine, respectively. Is also able to deaminate adenosine. This is 5-methylthioadenosine/S-adenosylhomocysteine deaminase from Saccharophagus degradans (strain 2-40 / ATCC 43961 / DSM 17024).